Consider the following 186-residue polypeptide: Peptidyl-tRNA hydrolase (186 aa).

Y14 contacts tRNA. Catalysis depends on H19, which acts as the Proton acceptor. The tRNA site is built by F64, N66, and N112.

The protein belongs to the PTH family. As to quaternary structure, monomer.

The protein localises to the cytoplasm. The enzyme catalyses an N-acyl-L-alpha-aminoacyl-tRNA + H2O = an N-acyl-L-amino acid + a tRNA + H(+). In terms of biological role, hydrolyzes ribosome-free peptidyl-tRNAs (with 1 or more amino acids incorporated), which drop off the ribosome during protein synthesis, or as a result of ribosome stalling. Catalyzes the release of premature peptidyl moieties from peptidyl-tRNA molecules trapped in stalled 50S ribosomal subunits, and thus maintains levels of free tRNAs and 50S ribosomes. This Mycoplasma capricolum subsp. capricolum (strain California kid / ATCC 27343 / NCTC 10154) protein is Peptidyl-tRNA hydrolase.